The sequence spans 843 residues: INO80 complex subunit D-B (843 aa).

Residues 159–175 (TLNHKQKQQDHSVDTNH) show a composition bias toward basic and acidic residues. Disordered regions lie at residues 159–216 (TLNH…PTVR), 221–240 (FKTS…STDN), 503–550 (YHHH…LPQG), 695–726 (SLLH…HLTD), and 791–843 (LSTP…TAAP). 3 stretches are compositionally biased toward polar residues: residues 176–187 (LRTSSLPSTLSH), 197–216 (RATQ…PTVR), and 221–231 (FKTSSSLQDTH). A compositionally biased stretch (basic residues) spans 503–540 (YHHHQQIQRHRPLKKAKPPALSKKHKKKGKRGTQRRPQ). A compositionally biased stretch (pro residues) spans 705-717 (PPSPPSPQPPLTP). The span at 796–821 (QPSSALSALPQSSQTRSTTTSPTSQT) shows a compositional bias: low complexity.

This sequence belongs to the INO80D family. In terms of assembly, component of the chromatin-remodeling INO80 complex.

The protein resides in the nucleus. Putative regulatory component of the chromatin remodeling INO80 complex which is involved in transcriptional regulation, DNA replication and probably DNA repair. This Danio rerio (Zebrafish) protein is INO80 complex subunit D-B (ino80db).